The primary structure comprises 198 residues: Ribonuclease HII (198 aa).

The RNase H type-2 domain maps to 11-198; it reads NLIAGVDEVG…GPVKRVLGLV (188 aa). Residues D17, E18, and D109 each contribute to the a divalent metal cation site.

Belongs to the RNase HII family. Mn(2+) serves as cofactor. Mg(2+) is required as a cofactor.

The protein localises to the cytoplasm. It catalyses the reaction Endonucleolytic cleavage to 5'-phosphomonoester.. In terms of biological role, endonuclease that specifically degrades the RNA of RNA-DNA hybrids. The chain is Ribonuclease HII from Yersinia pseudotuberculosis serotype O:1b (strain IP 31758).